Consider the following 447-residue polypeptide: Probable glycine dehydrogenase (decarboxylating) subunit 1 (447 aa).

The protein belongs to the GcvP family. N-terminal subunit subfamily. As to quaternary structure, the glycine cleavage system is composed of four proteins: P, T, L and H. In this organism, the P 'protein' is a heterodimer of two subunits.

It catalyses the reaction N(6)-[(R)-lipoyl]-L-lysyl-[glycine-cleavage complex H protein] + glycine + H(+) = N(6)-[(R)-S(8)-aminomethyldihydrolipoyl]-L-lysyl-[glycine-cleavage complex H protein] + CO2. In terms of biological role, the glycine cleavage system catalyzes the degradation of glycine. The P protein binds the alpha-amino group of glycine through its pyridoxal phosphate cofactor; CO(2) is released and the remaining methylamine moiety is then transferred to the lipoamide cofactor of the H protein. This chain is Probable glycine dehydrogenase (decarboxylating) subunit 1, found in Metallosphaera sedula (strain ATCC 51363 / DSM 5348 / JCM 9185 / NBRC 15509 / TH2).